The chain runs to 310 residues: Taste receptor type 2 member 125 (310 aa).

The Extracellular portion of the chain corresponds to 1–2 (MG). The chain crosses the membrane as a helical span at residues 3-23 (IVIGIICAFIIIVQFIIGNVA). Residues 24-46 (NGFIALVNIIDWVKRRKISLVDQ) are Cytoplasmic-facing. Residues 47–67 (IITALAISRIDMLCSTFLIVL) traverse the membrane as a helical segment. Over 68–87 (ITSLYPDLNTAVNMVKISNN) the chain is Extracellular. The helical transmembrane segment at 88–108 (IWIVANHFSIWLATSLSIFYF) threads the bilayer. Over 109-128 (LKIANFSNYVFLCLRWRLSK) the chain is Cytoplasmic. The helical transmembrane segment at 129–149 (VVSVTLLLSLVLLLMNILIMN) threads the bilayer. Topologically, residues 150-185 (MHIDTWSDGFKRNVSFGFRSKNCTRFFKLALLINTT) are extracellular. N162, N171, and N183 each carry an N-linked (GlcNAc...) asparagine glycan. A helical membrane pass occupies residues 186 to 206 (FTCVPFTVSMVAFLLLIFSLW). Topologically, residues 207 to 232 (RHLKNMQYHAKGSRDPSTAVHIKALQ) are cytoplasmic. The helical transmembrane segment at 233–253 (MVVVFVLFYTFFFLSLAIQLW) threads the bilayer. The Extracellular portion of the chain corresponds to 254-261 (TSESLEKN). A helical transmembrane segment spans residues 262–282 (NLFYVTLIITFPSVHSCMLIL). The Cytoplasmic portion of the chain corresponds to 283–310 (RNSKLRQASLLVLWWLLCRSKDIQTLVP).

Belongs to the G-protein coupled receptor T2R family.

It localises to the membrane. Functionally, putative taste receptor which may play a role in the perception of bitterness. This Rattus norvegicus (Rat) protein is Taste receptor type 2 member 125.